A 290-amino-acid chain; its full sequence is Membrane-spanning 4-domains subfamily A member 8 (290 aa).

Over residues 1-21 (MNRPTAQGAVNLSGSKFSTAK) the composition is skewed to polar residues. The disordered stretch occupies residues 1-25 (MNRPTAQGAVNLSGSKFSTAKSWEP). Residues 1–108 (MNRPTAQGAV…PAQRVLKKGQ (108 aa)) are Cytoplasmic-facing. The chain crosses the membrane as a helical span at residues 109–129 (VLGAIQILIGLVHIGLGSIMI). At 130 to 138 (TNLFSHYTP) the chain is on the extracellular side. The helical transmembrane segment at 139 to 159 (VSLYGGFPFWGGIWFIISGSL) threads the bilayer. Residues 160–174 (SVAAETQPNSPCLLN) are Cytoplasmic-facing. Residues 175–195 (GSVGLNIFSAICSAVGIMLFI) form a helical membrane-spanning segment. Topologically, residues 196–220 (TDISISSGYIYPSYYPYQENLGVRT) are extracellular. The helical transmembrane segment at 221 to 241 (GVAISSVLLIFCLLELSIASV) threads the bilayer. The Cytoplasmic segment spans residues 242 to 290 (SSHFGCQVACCHYNNPGVVIPNVYAANPVVIPEPPNPIPSYSEVVQDSR).

The protein belongs to the MS4A family. Expressed strongly in intestine and colon and minimally in lung and ovary.

The protein localises to the membrane. In terms of biological role, may be involved in signal transduction as a component of a multimeric receptor complex. This Mus musculus (Mouse) protein is Membrane-spanning 4-domains subfamily A member 8 (Ms4a8).